Here is a 211-residue protein sequence, read N- to C-terminus: Urease accessory protein UreG (211 aa).

Residue 12 to 19 participates in GTP binding; it reads GPVGAGKT.

The protein belongs to the SIMIBI class G3E GTPase family. UreG subfamily. In terms of assembly, homodimer. UreD, UreF and UreG form a complex that acts as a GTP-hydrolysis-dependent molecular chaperone, activating the urease apoprotein by helping to assemble the nickel containing metallocenter of UreC. The UreE protein probably delivers the nickel.

The protein resides in the cytoplasm. Its function is as follows. Facilitates the functional incorporation of the urease nickel metallocenter. This process requires GTP hydrolysis, probably effectuated by UreG. This is Urease accessory protein UreG from Paracoccus denitrificans (strain Pd 1222).